The following is a 552-amino-acid chain: Formate--tetrahydrofolate ligase (552 aa).

65–72 lines the ATP pocket; it reads TPAGEGKT.

The protein belongs to the formate--tetrahydrofolate ligase family.

It catalyses the reaction (6S)-5,6,7,8-tetrahydrofolate + formate + ATP = (6R)-10-formyltetrahydrofolate + ADP + phosphate. Its pathway is one-carbon metabolism; tetrahydrofolate interconversion. The sequence is that of Formate--tetrahydrofolate ligase from Fervidobacterium nodosum (strain ATCC 35602 / DSM 5306 / Rt17-B1).